A 398-amino-acid chain; its full sequence is MAIDKKKKEKDVKVHNITDAEEKKKALETAIAFIEKQFGKGAIMKLGDARAMDVEAIPTGSMMLDMALGIGGVPRGRIIEIYGPESSGKTTVALHIIAETQKMGGEVAFIDVEHALDPVYAKNLGVDIDSMLVSQPDSGEQALEIAEALARSGAIDCIVIDSVAAMVTKAEIDGEMGDTHVGQLARLMSQAMRKLTGVVSKSNTTCVFINQVREKIGVMYGNPETTPGGRALKFYASVRIEVRRGEQIKDGGEVLGNRTKCKVVKNKVAPPFKECEFDIMYGKGISRVGEVLDTAVDLGIVKKGGAWFSYEDYKLGQGRDNSKQFLLDHPDIMAEIENKIKASSAEMIAAAGQKNDKKSKLEEKANAGAGISEASEPDSSAEEDFEEFAPIDIGSLGE.

83-90 contacts ATP; that stretch reads GPESSGKT. Positions 351–398 are disordered; the sequence is AGQKNDKKSKLEEKANAGAGISEASEPDSSAEEDFEEFAPIDIGSLGE. The span at 354 to 365 shows a compositional bias: basic and acidic residues; the sequence is KNDKKSKLEEKA. Residues 375–389 show a composition bias toward acidic residues; it reads SEPDSSAEEDFEEFA.

This sequence belongs to the RecA family.

The protein localises to the cytoplasm. In terms of biological role, can catalyze the hydrolysis of ATP in the presence of single-stranded DNA, the ATP-dependent uptake of single-stranded DNA by duplex DNA, and the ATP-dependent hybridization of homologous single-stranded DNAs. It interacts with LexA causing its activation and leading to its autocatalytic cleavage. The chain is Protein RecA from Ruminococcus albus (strain ATCC 27210 / DSM 20455 / JCM 14654 / NCDO 2250 / 7).